The sequence spans 345 residues: Holliday junction branch migration complex subunit RuvB (345 aa).

Residues L3–Y187 form a large ATPase domain (RuvB-L) region. Residues L26, R27, G68, K71, T72, T73, E134–F136, R177, Y187, and R224 contribute to the ATP site. T72 serves as a coordination point for Mg(2+). The tract at residues S188 to E259 is small ATPAse domain (RuvB-S). The head domain (RuvB-H) stretch occupies residues S262–L345. DNA is bound by residues R317 and R322.

This sequence belongs to the RuvB family. In terms of assembly, homohexamer. Forms an RuvA(8)-RuvB(12)-Holliday junction (HJ) complex. HJ DNA is sandwiched between 2 RuvA tetramers; dsDNA enters through RuvA and exits via RuvB. An RuvB hexamer assembles on each DNA strand where it exits the tetramer. Each RuvB hexamer is contacted by two RuvA subunits (via domain III) on 2 adjacent RuvB subunits; this complex drives branch migration. In the full resolvosome a probable DNA-RuvA(4)-RuvB(12)-RuvC(2) complex forms which resolves the HJ.

Its subcellular location is the cytoplasm. The catalysed reaction is ATP + H2O = ADP + phosphate + H(+). The RuvA-RuvB-RuvC complex processes Holliday junction (HJ) DNA during genetic recombination and DNA repair, while the RuvA-RuvB complex plays an important role in the rescue of blocked DNA replication forks via replication fork reversal (RFR). RuvA specifically binds to HJ cruciform DNA, conferring on it an open structure. The RuvB hexamer acts as an ATP-dependent pump, pulling dsDNA into and through the RuvAB complex. RuvB forms 2 homohexamers on either side of HJ DNA bound by 1 or 2 RuvA tetramers; 4 subunits per hexamer contact DNA at a time. Coordinated motions by a converter formed by DNA-disengaged RuvB subunits stimulates ATP hydrolysis and nucleotide exchange. Immobilization of the converter enables RuvB to convert the ATP-contained energy into a lever motion, pulling 2 nucleotides of DNA out of the RuvA tetramer per ATP hydrolyzed, thus driving DNA branch migration. The RuvB motors rotate together with the DNA substrate, which together with the progressing nucleotide cycle form the mechanistic basis for DNA recombination by continuous HJ branch migration. Branch migration allows RuvC to scan DNA until it finds its consensus sequence, where it cleaves and resolves cruciform DNA. The chain is Holliday junction branch migration complex subunit RuvB from Tropheryma whipplei (strain TW08/27) (Whipple's bacillus).